Here is a 1030-residue protein sequence, read N- to C-terminus: MKALFRFKSCLFDPTRRRNQLVSFSGFSKSSKSNKTRETTTTSKIQAEATAITSLFNEITEILGTDVVKLDETTRLRSHVSGAVSDNGVSVSCTEGVRQNAAMGFSGEDEKAQKVLHEEVDFSPVVHEITSVVRGDDVLVSMEDRLEKLSFRFEPEIVENVLKRCFKVPHLAMRFFNWVKQKDGFSHRVGIYNTMLSIAGEARNLDMVDELVSEMEKNGCDKDIRTWTILISVYGKAKKIGKGLLVFEKMRKSGFELDATAYNIMIRSLCIAGRGDLALEFYKEMMEKGITFGLRTYKMLLDCIAKSEKVDVVQSIADDMVRICEISEHDAFGYLLKSFCVSGKIKEALELIRELKNKEMCLDAKYFEILVKGLCRANRMVDALEIVDIMKRRKLDDSNVYGIIISGYLRQNDVSKALEQFEVIKKSGRPPRVSTYTEIMQHLFKLKQFEKGCNLFNEMIENGIEPDSVAITAVVAGHLGQNRVAEAWKVFSSMEEKGIKPTWKSYSIFVKELCRSSRYDEIIKIFNQMHASKIVIRDDIFSWVISSMEKNGEKEKIHLIKEIQKRSNSYCDELNGSGKAEFSQEEELVDDYNCPQLVQQSALPPALSAVDKMDVQEICRVLSSSRDWERTQEALEKSTVQFTPELVVEVLRHAKIQGNAVLRFFSWVGKRNGYKHNSEAYNMSIKVAGCGKDFKQMRSLFYEMRRQGCLITQDTWAIMIMQYGRTGLTNIAIRTFKEMKDMGLIPSSSTFKCLITVLCEKKGRNVEEATRTFREMIRSGFVPDRELVQDYLGCLCEVGNTKDAKSCLDSLGKIGFPVTVAYSIYIRALCRIGKLEEALSELASFEGERSLLDQYTYGSIVHGLLQRGDLQKALDKVNSMKEIGTKPGVHVYTSLIVYFFKEKQLEKVLETCQKMEGESCEPSVVTYTAMICGYMSLGKVEEAWNAFRNMEERGTSPDFKTYSKFINCLCQACKSEDALKLLSEMLDKGIAPSTINFRTVFYGLNREGKHDLARIALQKKSALVAQRTVS.

A mitochondrion-targeting transit peptide spans 1 to 77; the sequence is MKALFRFKSC…VKLDETTRLR (77 aa). 19 PPR repeats span residues 188–222, 223–257, 258–292, 293–323, 328–362, 363–393, 397–431, 432–466, 467–501, 502–536, 677–711, 712–746, 747–783, 784–814, 818–852, 853–887, 888–922, 923–957, and 958–992; these read RVGI…GCDK, DIRT…GFEL, DATA…GITF, GLRT…MVRI, EHDA…EMCL, DAKY…MKRR, DSNV…GRPP, RVST…GIEP, DSVA…GIKP, TWKS…KIVI, NSEA…GCLI, TQDT…GLIP, SSST…GFVP, DREL…LGKI, VTVA…RSLL, DQYT…GTKP, GVHV…SCEP, SVVT…GTSP, and DFKT…GIAP.

This sequence belongs to the PPR family. P subfamily.

It is found in the mitochondrion. The sequence is that of Putative pentatricopeptide repeat-containing protein At5g06400, mitochondrial from Arabidopsis thaliana (Mouse-ear cress).